The sequence spans 259 residues: Large ribosomal subunit protein uL3m (259 aa).

The N-terminal 15 residues, 1-15 (MQSRFLISPTLIRTF), are a transit peptide targeting the mitochondrion. The segment covering 176-197 (ASHGASLSHRTPGSTGQNTTPS) has biased composition (polar residues). Residues 176–208 (ASHGASLSHRTPGSTGQNTTPSRVLPGRKMAGH) form a disordered region.

The protein belongs to the universal ribosomal protein uL3 family. As to quaternary structure, component of the mitochondrial large ribosomal subunit (mt-LSU). Mature yeast 74S mitochondrial ribosomes consist of a small (37S) and a large (54S) subunit. The 37S small subunit contains a 15S ribosomal RNA (15S mt-rRNA) and at least 32 different proteins. The 54S large subunit contains a 21S rRNA (21S mt-rRNA) and at least 45 different proteins.

The protein localises to the cytoplasm. It localises to the mitochondrion. Its function is as follows. Component of the mitochondrial ribosome (mitoribosome), a dedicated translation machinery responsible for the synthesis of mitochondrial genome-encoded proteins, including at least some of the essential transmembrane subunits of the mitochondrial respiratory chain. The mitoribosomes are attached to the mitochondrial inner membrane and translation products are cotranslationally integrated into the membrane. This is Large ribosomal subunit protein uL3m (mrpl9) from Schizosaccharomyces pombe (strain 972 / ATCC 24843) (Fission yeast).